The following is a 227-amino-acid chain: Cytochrome c oxidase subunit 2 (227 aa).

The Mitochondrial intermembrane segment spans residues 1–14; it reads MALPFQLGFQDATS. Residues 15 to 45 form a helical membrane-spanning segment; sequence PIMEELLHFHDHTLMIVFMISSLVLYLISSM. Residues 46–59 lie on the Mitochondrial matrix side of the membrane; it reads LTTRLTHTSTMDAQ. The chain crosses the membrane as a helical span at residues 60 to 87; sequence EVETIWTILPAIILITIALPSLRILYMM. Over 88–227 the chain is Mitochondrial intermembrane; it reads DEINNPSMTI…CFEKWSTSML (140 aa). H161, C196, E198, C200, H204, and M207 together coordinate Cu cation. E198 contacts Mg(2+).

The protein belongs to the cytochrome c oxidase subunit 2 family. In terms of assembly, component of the cytochrome c oxidase (complex IV, CIV), a multisubunit enzyme composed of 14 subunits. The complex is composed of a catalytic core of 3 subunits MT-CO1, MT-CO2 and MT-CO3, encoded in the mitochondrial DNA, and 11 supernumerary subunits COX4I, COX5A, COX5B, COX6A, COX6B, COX6C, COX7A, COX7B, COX7C, COX8 and NDUFA4, which are encoded in the nuclear genome. The complex exists as a monomer or a dimer and forms supercomplexes (SCs) in the inner mitochondrial membrane with NADH-ubiquinone oxidoreductase (complex I, CI) and ubiquinol-cytochrome c oxidoreductase (cytochrome b-c1 complex, complex III, CIII), resulting in different assemblies (supercomplex SCI(1)III(2)IV(1) and megacomplex MCI(2)III(2)IV(2)). Found in a complex with TMEM177, COA6, COX18, COX20, SCO1 and SCO2. Interacts with TMEM177 in a COX20-dependent manner. Interacts with COX20. Interacts with COX16. It depends on Cu cation as a cofactor.

It is found in the mitochondrion inner membrane. It carries out the reaction 4 Fe(II)-[cytochrome c] + O2 + 8 H(+)(in) = 4 Fe(III)-[cytochrome c] + 2 H2O + 4 H(+)(out). Its function is as follows. Component of the cytochrome c oxidase, the last enzyme in the mitochondrial electron transport chain which drives oxidative phosphorylation. The respiratory chain contains 3 multisubunit complexes succinate dehydrogenase (complex II, CII), ubiquinol-cytochrome c oxidoreductase (cytochrome b-c1 complex, complex III, CIII) and cytochrome c oxidase (complex IV, CIV), that cooperate to transfer electrons derived from NADH and succinate to molecular oxygen, creating an electrochemical gradient over the inner membrane that drives transmembrane transport and the ATP synthase. Cytochrome c oxidase is the component of the respiratory chain that catalyzes the reduction of oxygen to water. Electrons originating from reduced cytochrome c in the intermembrane space (IMS) are transferred via the dinuclear copper A center (CU(A)) of subunit 2 and heme A of subunit 1 to the active site in subunit 1, a binuclear center (BNC) formed by heme A3 and copper B (CU(B)). The BNC reduces molecular oxygen to 2 water molecules using 4 electrons from cytochrome c in the IMS and 4 protons from the mitochondrial matrix. The sequence is that of Cytochrome c oxidase subunit 2 (MT-CO2) from Phyllostomus hastatus (Greater spear-nosed bat).